A 1309-amino-acid chain; its full sequence is Mediator of RNA polymerase II transcription subunit 33A (1309 aa).

Residues 809 to 829 (QTLNPVNSGTSSSSGAASEDS) form a disordered region. A compositionally biased stretch (low complexity) spans 816–826 (SGTSSSSGAAS).

The protein belongs to the Mediator complex subunit 33 family. As to quaternary structure, component of the Mediator complex.

The protein resides in the nucleus. Functionally, component of the Mediator complex, a coactivator involved in the regulated transcription of nearly all RNA polymerase II-dependent genes. Mediator functions as a bridge to convey information from gene-specific regulatory proteins to the basal RNA polymerase II transcription machinery. The Mediator complex, having a compact conformation in its free form, is recruited to promoters by direct interactions with regulatory proteins and serves for the assembly of a functional preinitiation complex with RNA polymerase II and the general transcription factors. Involved in the repression of phenylpropanoid biosynthesis. May compete with MED33B for common binding partners or for occupancy in Mediator. The chain is Mediator of RNA polymerase II transcription subunit 33A (MED33A) from Arabidopsis thaliana (Mouse-ear cress).